We begin with the raw amino-acid sequence, 108 residues long: Malonate decarboxylase acyl carrier protein (108 aa).

Ser35 carries the post-translational modification O-(phosphoribosyl dephospho-coenzyme A)serine.

Belongs to the MdcC family. Covalently binds the prosthetic group of malonate decarboxylase.

Its subcellular location is the cytoplasm. Functionally, subunit of malonate decarboxylase, it is an acyl carrier protein to which acetyl and malonyl thioester residues are bound via a 2'-(5''-phosphoribosyl)-3'-dephospho-CoA prosthetic group and turn over during the catalytic mechanism. The protein is Malonate decarboxylase acyl carrier protein of Burkholderia cepacia (Pseudomonas cepacia).